Reading from the N-terminus, the 215-residue chain is 3-demethoxyubiquinol 3-hydroxylase (215 aa).

Fe cation-binding residues include Glu-64, Glu-94, His-97, Glu-146, Glu-178, and His-181.

This sequence belongs to the COQ7 family. It depends on Fe cation as a cofactor.

It is found in the cell membrane. The catalysed reaction is a 5-methoxy-2-methyl-3-(all-trans-polyprenyl)benzene-1,4-diol + AH2 + O2 = a 3-demethylubiquinol + A + H2O. Its pathway is cofactor biosynthesis; ubiquinone biosynthesis. Catalyzes the hydroxylation of 2-nonaprenyl-3-methyl-6-methoxy-1,4-benzoquinol during ubiquinone biosynthesis. The sequence is that of 3-demethoxyubiquinol 3-hydroxylase from Pseudomonas putida (strain W619).